The primary structure comprises 359 residues: 5-amino-6-(D-ribitylamino)uracil--L-tyrosine 4-hydroxyphenyl transferase 1 (359 aa).

The Radical SAM core domain occupies 45–282; the sequence is VTYVVNANIN…VYAISRIFFK (238 aa). 3 residues coordinate [4Fe-4S] cluster: Cys59, Cys63, and Cys66.

This sequence belongs to the radical SAM superfamily. CofH family. In terms of assembly, consists of two subunits, CofG and CofH. [4Fe-4S] cluster is required as a cofactor.

It carries out the reaction 5-amino-6-(D-ribitylamino)uracil + L-tyrosine + S-adenosyl-L-methionine = 5-amino-5-(4-hydroxybenzyl)-6-(D-ribitylimino)-5,6-dihydrouracil + 2-iminoacetate + 5'-deoxyadenosine + L-methionine + H(+). The protein operates within cofactor biosynthesis; coenzyme F0 biosynthesis. Its function is as follows. Catalyzes the radical-mediated synthesis of 5-amino-5-(4-hydroxybenzyl)-6-(D-ribitylimino)-5,6-dihydrouracil from 5-amino-6-(D-ribitylamino)uracil and L-tyrosine. This chain is 5-amino-6-(D-ribitylamino)uracil--L-tyrosine 4-hydroxyphenyl transferase 1, found in Methanococcus maripaludis (strain DSM 14266 / JCM 13030 / NBRC 101832 / S2 / LL).